We begin with the raw amino-acid sequence, 267 residues long: Translation initiation factor 2 subunit alpha (267 aa).

An S1 motif domain is found at 12–83 (GELVVATVKE…RKKQVDVSLK (72 aa)).

Belongs to the eIF-2-alpha family. In terms of assembly, heterotrimer composed of an alpha, a beta and a gamma chain.

Functionally, eIF-2 functions in the early steps of protein synthesis by forming a ternary complex with GTP and initiator tRNA. The sequence is that of Translation initiation factor 2 subunit alpha from Hyperthermus butylicus (strain DSM 5456 / JCM 9403 / PLM1-5).